Reading from the N-terminus, the 236-residue chain is Large ribosomal subunit protein uL2 (236 aa).

Polar residues predominate over residues 1 to 10 (MGHRITTQSR). Disordered stretches follow at residues 1-20 (MGHR…YRAP) and 202-236 (GGGG…TGRR). Basic residues predominate over residues 224-236 (KVGHIAARRTGRR).

This sequence belongs to the universal ribosomal protein uL2 family. As to quaternary structure, part of the 50S ribosomal subunit. Forms a bridge to the 30S subunit in the 70S ribosome.

One of the primary rRNA binding proteins. Required for association of the 30S and 50S subunits to form the 70S ribosome, for tRNA binding and peptide bond formation. It has been suggested to have peptidyltransferase activity; this is somewhat controversial. Makes several contacts with the 16S rRNA in the 70S ribosome. This chain is Large ribosomal subunit protein uL2, found in Methanospirillum hungatei JF-1 (strain ATCC 27890 / DSM 864 / NBRC 100397 / JF-1).